Reading from the N-terminus, the 371-residue chain is Cytochrome b (371 aa).

4 consecutive transmembrane segments (helical) span residues F25–V45, W69–I90, W105–L125, and F170–I190. Positions 75 and 89 each coordinate heme b. Heme b is bound by residues H174 and H188. Residue H193 coordinates a ubiquinone. 4 helical membrane passes run H218–F238, L280–H300, L312–T332, and F339–P358.

It belongs to the cytochrome b family. As to quaternary structure, the cytochrome bc1 complex contains 3 respiratory subunits (MT-CYB, CYC1 and UQCRFS1), 2 core proteins (UQCRC1 and UQCRC2) and probably 6 low-molecular weight proteins. Heme b serves as cofactor.

The protein resides in the mitochondrion inner membrane. Component of the ubiquinol-cytochrome c reductase complex (complex III or cytochrome b-c1 complex) that is part of the mitochondrial respiratory chain. The b-c1 complex mediates electron transfer from ubiquinol to cytochrome c. Contributes to the generation of a proton gradient across the mitochondrial membrane that is then used for ATP synthesis. This Liasis olivaceus (Olive python) protein is Cytochrome b (MT-CYB).